The sequence spans 278 residues: Formamidopyrimidine-DNA glycosylase (278 aa).

The Schiff-base intermediate with DNA role is filled by P2. E3 serves as the catalytic Proton donor. K59 serves as the catalytic Proton donor; for beta-elimination activity. Residues H93, R112, and R153 each contribute to the DNA site. The FPG-type zinc-finger motif lies at 238–272; sequence NVYDRAGEPCPRCQSTIERIVVAQRSTYFCPTCQI. Catalysis depends on R262, which acts as the Proton donor; for delta-elimination activity.

This sequence belongs to the FPG family. Monomer. It depends on Zn(2+) as a cofactor.

It catalyses the reaction Hydrolysis of DNA containing ring-opened 7-methylguanine residues, releasing 2,6-diamino-4-hydroxy-5-(N-methyl)formamidopyrimidine.. The catalysed reaction is 2'-deoxyribonucleotide-(2'-deoxyribose 5'-phosphate)-2'-deoxyribonucleotide-DNA = a 3'-end 2'-deoxyribonucleotide-(2,3-dehydro-2,3-deoxyribose 5'-phosphate)-DNA + a 5'-end 5'-phospho-2'-deoxyribonucleoside-DNA + H(+). Its function is as follows. Involved in base excision repair of DNA damaged by oxidation or by mutagenic agents. Acts as a DNA glycosylase that recognizes and removes damaged bases. Has a preference for oxidized purines, such as 7,8-dihydro-8-oxoguanine (8-oxoG). Has AP (apurinic/apyrimidinic) lyase activity and introduces nicks in the DNA strand. Cleaves the DNA backbone by beta-delta elimination to generate a single-strand break at the site of the removed base with both 3'- and 5'-phosphates. The polypeptide is Formamidopyrimidine-DNA glycosylase (Chloroflexus aurantiacus (strain ATCC 29366 / DSM 635 / J-10-fl)).